An 864-amino-acid chain; its full sequence is Seed linoleate 9S-lipoxygenase-2 (864 aa).

Residues 46 to 171 (SGINIIGSTL…LYKSPRIFFA (126 aa)) form the PLAT domain. A Lipoxygenase domain is found at 174-864 (SYLPSETPSP…FRGIPNSISI (691 aa)). Positions 230-264 (PILGGSSTHPYPRRGRTGRYPTRKDPNSEKPATET) are disordered. The span at 251–264 (TRKDPNSEKPATET) shows a compositional bias: basic and acidic residues. Residues histidine 524, histidine 529, histidine 716, asparagine 720, and isoleucine 864 each contribute to the Fe cation site.

Belongs to the lipoxygenase family. Fe cation serves as cofactor.

Its subcellular location is the cytoplasm. The enzyme catalyses (9Z,12Z)-octadecadienoate + O2 = (9S)-hydroperoxy-(10E,12Z)-octadecadienoate. The protein operates within lipid metabolism; oxylipin biosynthesis. In terms of biological role, plant lipoxygenase may be involved in a number of diverse aspects of plant physiology including growth and development, pest resistance, and senescence or responses to wounding. It catalyzes the hydroperoxidation of lipids containing a cis,cis-1,4-pentadiene structure. In Pisum sativum (Garden pea), this protein is Seed linoleate 9S-lipoxygenase-2 (LOX1.2).